A 1162-amino-acid polypeptide reads, in one-letter code: DNA-directed RNA polymerase subunit beta (1162 aa).

The protein belongs to the RNA polymerase beta chain family. As to quaternary structure, the RNAP catalytic core consists of 2 alpha, 1 beta, 1 beta' and 1 omega subunit. When a sigma factor is associated with the core the holoenzyme is formed, which can initiate transcription.

It carries out the reaction RNA(n) + a ribonucleoside 5'-triphosphate = RNA(n+1) + diphosphate. In terms of biological role, DNA-dependent RNA polymerase catalyzes the transcription of DNA into RNA using the four ribonucleoside triphosphates as substrates. The protein is DNA-directed RNA polymerase subunit beta of Clavibacter sepedonicus (Clavibacter michiganensis subsp. sepedonicus).